Reading from the N-terminus, the 311-residue chain is tRNA pseudouridine synthase B (311 aa).

The Nucleophile role is filled by D49.

It belongs to the pseudouridine synthase TruB family. Type 1 subfamily.

It catalyses the reaction uridine(55) in tRNA = pseudouridine(55) in tRNA. Responsible for synthesis of pseudouridine from uracil-55 in the psi GC loop of transfer RNAs. The chain is tRNA pseudouridine synthase B from Actinobacillus succinogenes (strain ATCC 55618 / DSM 22257 / CCUG 43843 / 130Z).